Here is a 22-residue protein sequence, read N- to C-terminus: Leptoglycin (22 aa).

Residues Gly1–Leu22 form a disordered region.

As to expression, expressed by the skin glands.

It localises to the secreted. Antimicrobial protein. Has antibacterial activity against the Gram-negative bacteria E.coli ATCC 28922 (MIC=50 uM), P.aeruginosa ATCC 9027 (MIC=8 uM) and C.freundii ATCC 8090 (MIC=75 uM). Does not have hemolytic activity. In Leptodactylus pentadactylus (Smokey jungle frog), this protein is Leptoglycin.